We begin with the raw amino-acid sequence, 410 residues long: WD repeat-containing protein jip5 (410 aa).

WD repeat units lie at residues 9–48 (PLSA…EEEH), 74–113 (RHKG…VENK), 119–160 (AKDG…SKVA), 223–264 (VSST…DQDE), 273–316 (GGGE…VVSE), and 320–357 (DETE…IGGE). A disordered region spans residues 41-65 (PTEEEEEHSDDEQASVSSSRNGKGH). A compositionally biased stretch (acidic residues) spans 43-53 (EEEEEHSDDEQ). The segment at 354 to 410 (IGGEKRGFGGDSDDSDDDSDDSDHEPKQGDDSRRKRKKQKGKDRGKGPEIMAFADLD) is disordered. Residues 364–376 (DSDDSDDDSDDSD) show a composition bias toward acidic residues. Residues 377 to 386 (HEPKQGDDSR) are compositionally biased toward basic and acidic residues.

Belongs to the WD repeat WDR55 family.

It localises to the nucleus. Its subcellular location is the nucleolus. The polypeptide is WD repeat-containing protein jip5 (jip5) (Emericella nidulans (strain FGSC A4 / ATCC 38163 / CBS 112.46 / NRRL 194 / M139) (Aspergillus nidulans)).